We begin with the raw amino-acid sequence, 119 residues long: Fluoride-specific ion channel FluC 1 (119 aa).

4 helical membrane passes run Val-6–Val-26, Phe-31–Tyr-51, Val-66–Ile-86, and Arg-91–Ala-111.

It belongs to the fluoride channel Fluc/FEX (TC 1.A.43) family.

The protein resides in the cell membrane. The enzyme catalyses fluoride(in) = fluoride(out). Fluoride-specific ion channel. Important for reducing fluoride concentration in the cell, thus reducing its toxicity. The protein is Fluoride-specific ion channel FluC 1 of Natronomonas pharaonis (strain ATCC 35678 / DSM 2160 / CIP 103997 / JCM 8858 / NBRC 14720 / NCIMB 2260 / Gabara) (Halobacterium pharaonis).